The following is a 247-amino-acid chain: MSGHSKWATIRRKKGAIDAKRGAIFTRIAKEISVAAKEGGGDQEGNPRLRLAVTKAKAANMPKDNIERAIKKGTGGLEGMVYEECLYECYAPGGVAIMVDVLTDKKSRTTPEIKSILTKLGGSLANAGAVSRLFERKGQLTLKADQISEEALFDLALGAGAEDIQVNDGMYVVLTSPSEYEAVQSALSSKGLNMEESEIKYIPMTTVEVNEKETAEKVMKLIENLEANDDVQGVSSNFELGEGVELD.

It belongs to the TACO1 family.

It is found in the cytoplasm. The sequence is that of Probable transcriptional regulatory protein LBF_0056 from Leptospira biflexa serovar Patoc (strain Patoc 1 / Ames).